The sequence spans 233 residues: Homeobox protein Hox-D4a (233 aa).

Positions 124 to 129 match the Antp-type hexapeptide motif; it reads VYPWMK. The segment at residues 145–204 is a DNA-binding region (homeobox); the sequence is PKRSRTAYTRQQVLELEKEFHFNRYLTRRRRIEIAHTLCLSERQIKIWFQNRRMKWTKDH. The disordered stretch occupies residues 203-233; sequence DHKLPNTKGRSAPASSHLQSIHKDQTDITSL. The segment covering 223 to 233 has biased composition (basic and acidic residues); sequence IHKDQTDITSL.

Belongs to the Antp homeobox family. Deformed subfamily.

Its subcellular location is the nucleus. Sequence-specific transcription factor which is part of a developmental regulatory system that provides cells with specific positional identities on the anterior-posterior axis. The polypeptide is Homeobox protein Hox-D4a (hoxd4a) (Takifugu rubripes (Japanese pufferfish)).